The chain runs to 150 residues: Galectin-2 (150 aa).

The Galectin domain occupies 9–141 (NQVKLQNDFK…FSSPVTVDVH (133 aa)). Positions 51, 55, 64, 75, and 77 each coordinate a carbohydrate.

In terms of assembly, homotetramer. Oligomerization is required for carbohydrate binding.

The protein localises to the secreted. It localises to the extracellular space. The protein resides in the extracellular matrix. It is found in the cell wall. Its subcellular location is the endomembrane system. Its function is as follows. Binds lactose. May play a role in fruiting body formation. Displays toxicity towards the nematode C.elegans by binding to a specific Gal-beta-1,4-Fuc-alpha-1,6 modification of N-glycan cores on C.elegans intestinal cells. In Coprinopsis cinerea (Inky cap fungus), this protein is Galectin-2 (Cgl2).